The sequence spans 435 residues: GTPase Der (435 aa).

2 consecutive EngA-type G domains span residues 3–168 and 176–351; these read PTVA…PEDD and VKLT…QNRR. GTP-binding positions include 9–16, 56–60, 120–123, 182–189, 229–233, and 294–297; these read GRPNVGKS, DTGGY, NKVD, DTAGL, and NKWD. Residues 352 to 435 form the KH-like domain; the sequence is MKIDTSRLNN…TPIELKFRRK (84 aa).

This sequence belongs to the TRAFAC class TrmE-Era-EngA-EngB-Septin-like GTPase superfamily. EngA (Der) GTPase family. Associates with the 50S ribosomal subunit.

GTPase that plays an essential role in the late steps of ribosome biogenesis. This chain is GTPase Der, found in Chloroherpeton thalassium (strain ATCC 35110 / GB-78).